A 1788-amino-acid chain; its full sequence is Protein TIC 214 (1788 aa).

6 helical membrane-spanning segments follow: residues 25-45 (IINS…FSIG), 70-90 (IGFI…PLHL), 95-115 (PHTI…WNNH), 132-152 (LNIQ…HFIL), 180-200 (VGWL…LFWI), and 223-243 (IFSI…PSPL). Disordered regions lie at residues 248 to 297 (LKKT…EEKE) and 1482 to 1526 (DLEN…DFDR). 2 stretches are compositionally biased toward basic and acidic residues: residues 253–277 (KREE…EKGT) and 1513–1526 (PLKK…DFDR).

This sequence belongs to the TIC214 family. In terms of assembly, part of the Tic complex.

Its subcellular location is the plastid. The protein localises to the chloroplast inner membrane. In terms of biological role, involved in protein precursor import into chloroplasts. May be part of an intermediate translocation complex acting as a protein-conducting channel at the inner envelope. The polypeptide is Protein TIC 214 (Ranunculus macranthus (Large buttercup)).